A 407-amino-acid chain; its full sequence is Peptidase T (407 aa).

His81 provides a ligand contact to Zn(2+). The active site involves Asp83. Asp142 lines the Zn(2+) pocket. Glu176 acts as the Proton acceptor in catalysis. Zn(2+) contacts are provided by Glu177, Asp199, and His381.

The protein belongs to the peptidase M20B family. It depends on Zn(2+) as a cofactor.

The protein localises to the cytoplasm. It carries out the reaction Release of the N-terminal residue from a tripeptide.. Its function is as follows. Cleaves the N-terminal amino acid of tripeptides. This is Peptidase T from Streptococcus sanguinis (strain SK36).